Consider the following 288-residue polypeptide: Aminoglycoside N(3)-acetyltransferase VII (288 aa).

It belongs to the antibiotic N-acetyltransferase family.

It carries out the reaction a 2-deoxystreptamine antibiotic + acetyl-CoA = an N(3)-acetyl-2-deoxystreptamine antibiotic + CoA + H(+). Its function is as follows. Resistance to paromomycin. This Streptomyces paromomycinus (Streptomyces rimosus subsp. paromomycinus) protein is Aminoglycoside N(3)-acetyltransferase VII (aacC7).